We begin with the raw amino-acid sequence, 715 residues long: ATP-dependent DNA helicase Hel308 (715 aa).

The Q motif signature appears at 1-29 (MKVGELNVSEKIKEILRERGIEELYPPQA). ATP-binding positions include Q28 and 46-53 (IPTASGKT). The Helicase ATP-binding domain maps to 33-197 (TSGVLEGENL…WLNAKLIRSD (165 aa)). A DEAH box motif is present at residues 145-148 (DEIH). Residues 226–422 (WEELVYDAVK…ILRSQILALI (197 aa)) form the Helicase C-terminal domain.

It belongs to the helicase family. Hel308 subfamily. In terms of assembly, monomer.

The enzyme catalyses Couples ATP hydrolysis with the unwinding of duplex DNA by translocating in the 3'-5' direction.. It catalyses the reaction ATP + H2O = ADP + phosphate + H(+). DNA-dependent ATPase and 3'-5' DNA helicase that may be involved in repair of stalled replication forks. Its function is as follows. Rapidly unwinds double-stranded (ds)DNA with a 3'-overhang, has no strand reannealing capabilities. Binds single-stranded (ss)DNA, dsDNA with a 3'-overhang and ssRNA. The chain is ATP-dependent DNA helicase Hel308 from Pyrococcus abyssi (strain GE5 / Orsay).